The chain runs to 354 residues: Protein CbrA (354 aa).

It belongs to the CbrA family.

This Escherichia coli (strain K12) protein is Protein CbrA (cbrA).